Consider the following 260-residue polypeptide: Transcription repressor OFP13 (260 aa).

Residues 150 to 211 (VAMESEDPYG…VSAFVDLLSG (62 aa)) form the OVATE domain.

As to expression, expressed in roots, rosette and cauline leaves, shoots, stems, flower buds and siliques.

The protein localises to the nucleus. Transcriptional repressor that regulates multiple aspects of plant growth and development through the regulation of BEL1-LIKE (BLH) and KNOX TALE (KNAT) homeodomain transcription factors. This chain is Transcription repressor OFP13 (OFP13), found in Arabidopsis thaliana (Mouse-ear cress).